The sequence spans 239 residues: UDP-2,3-diacylglucosamine hydrolase (239 aa).

Mn(2+)-binding residues include aspartate 8, histidine 10, aspartate 41, asparagine 78, and histidine 113. Asparagine 78–arginine 79 is a substrate binding site. The substrate site is built by aspartate 121, serine 159, asparagine 163, lysine 166, and histidine 194. Mn(2+)-binding residues include histidine 194 and histidine 196.

The protein belongs to the LpxH family. Requires Mn(2+) as cofactor.

Its subcellular location is the cell inner membrane. It carries out the reaction UDP-2-N,3-O-bis[(3R)-3-hydroxytetradecanoyl]-alpha-D-glucosamine + H2O = 2-N,3-O-bis[(3R)-3-hydroxytetradecanoyl]-alpha-D-glucosaminyl 1-phosphate + UMP + 2 H(+). It participates in glycolipid biosynthesis; lipid IV(A) biosynthesis; lipid IV(A) from (3R)-3-hydroxytetradecanoyl-[acyl-carrier-protein] and UDP-N-acetyl-alpha-D-glucosamine: step 4/6. Its function is as follows. Hydrolyzes the pyrophosphate bond of UDP-2,3-diacylglucosamine to yield 2,3-diacylglucosamine 1-phosphate (lipid X) and UMP by catalyzing the attack of water at the alpha-P atom. Involved in the biosynthesis of lipid A, a phosphorylated glycolipid that anchors the lipopolysaccharide to the outer membrane of the cell. In Shewanella sp. (strain ANA-3), this protein is UDP-2,3-diacylglucosamine hydrolase.